We begin with the raw amino-acid sequence, 25 residues long: Cruzioseptin-13 (25 aa).

The residue at position 25 (Asn-25) is an Asparagine amide.

In terms of tissue distribution, expressed by the skin glands.

Its subcellular location is the secreted. Functionally, has antimicrobial activity. In Cruziohyla calcarifer (Splendid leaf frog), this protein is Cruzioseptin-13.